A 52-amino-acid chain; its full sequence is Ovomucoid (52 aa).

In terms of domain architecture, Kazal-like spans 2–52; sequence VDCSEYPKPACPKDYRPVCGSDNKTYGNKCNFCNAVVESNGTLTLNRFGKC. Disulfide bonds link Cys-4/Cys-34, Cys-12/Cys-31, and Cys-20/Cys-52. Residue Asn-41 is glycosylated (N-linked (GlcNAc...) asparagine).

It localises to the secreted. This chain is Ovomucoid, found in Coturnix delegorguei (Harlequin quail).